Reading from the N-terminus, the 259-residue chain is Global transcriptional regulator CodY (259 aa).

A GAF domain region spans residues 1 to 155 (MNLLEKTRQL…SATVVGMEIL (155 aa)). The H-T-H motif DNA-binding region spans 203 to 222 (ASKIADRVGITRSVIVNALR).

Belongs to the CodY family.

The protein resides in the cytoplasm. In terms of biological role, DNA-binding global transcriptional regulator which is involved in the adaptive response to starvation and acts by directly or indirectly controlling the expression of numerous genes in response to nutrient availability. During rapid exponential growth, CodY is highly active and represses genes whose products allow adaptation to nutrient depletion. This Exiguobacterium sp. (strain ATCC BAA-1283 / AT1b) protein is Global transcriptional regulator CodY.